Consider the following 422-residue polypeptide: Adenylosuccinate synthetase (422 aa).

GTP-binding positions include 11–17 and 39–41; these read GDEGKGK and GHT. D12 serves as the catalytic Proton acceptor. The Mg(2+) site is built by D12 and G39. Residues 12 to 15, 37 to 40, T129, R143, N219, T234, and R298 each bind IMP; these read DEGK and NAGH. H40 (proton donor) is an active-site residue. 294–300 is a binding site for substrate; it reads VTTGRKR. GTP is bound by residues R300, 326-328, and 411-413; these read KLD and GTG.

Belongs to the adenylosuccinate synthetase family. Homodimer. Mg(2+) serves as cofactor.

Its subcellular location is the cytoplasm. The catalysed reaction is IMP + L-aspartate + GTP = N(6)-(1,2-dicarboxyethyl)-AMP + GDP + phosphate + 2 H(+). Its pathway is purine metabolism; AMP biosynthesis via de novo pathway; AMP from IMP: step 1/2. In terms of biological role, plays an important role in the de novo pathway and in the salvage pathway of purine nucleotide biosynthesis. Catalyzes the first committed step in the biosynthesis of AMP from IMP. The chain is Adenylosuccinate synthetase from Talaromyces stipitatus (strain ATCC 10500 / CBS 375.48 / QM 6759 / NRRL 1006) (Penicillium stipitatum).